The chain runs to 160 residues: Cyclic di-GMP-binding protein Smlt4090 (160 aa).

Residues K33, K132, R134, D135, and D160 each coordinate 3',3'-c-di-GMP.

The protein belongs to the YajQ family.

Its function is as follows. Cyclic di-GMP effector that significantly contributes to virulence. Binds bis-(3',5')-cyclic diguanylate (cyclic di-GMP or c-di-GMP), an important bacterial second messenger that controls a wide range of cellular processes. The sequence is that of Cyclic di-GMP-binding protein Smlt4090 from Stenotrophomonas maltophilia (strain K279a).